The primary structure comprises 101 residues: Large ribosomal subunit protein uL23 (101 aa).

This sequence belongs to the universal ribosomal protein uL23 family. As to quaternary structure, part of the 50S ribosomal subunit. Contacts protein L29, and trigger factor when it is bound to the ribosome.

In terms of biological role, one of the early assembly proteins it binds 23S rRNA. One of the proteins that surrounds the polypeptide exit tunnel on the outside of the ribosome. Forms the main docking site for trigger factor binding to the ribosome. This is Large ribosomal subunit protein uL23 from Corynebacterium diphtheriae (strain ATCC 700971 / NCTC 13129 / Biotype gravis).